Here is a 1092-residue protein sequence, read N- to C-terminus: Probable arabinosyltransferase A (1092 aa).

The next 13 membrane-spanning stretches (helical) occupy residues 21–43, 214–233, 249–271, 324–346, 353–372, 382–399, 404–426, 517–534, 541–563, 568–590, 602–624, 639–661, and 682–704; these read IARLIAVVAGIAGVLLCGLVPLL, AVMVLGLACVIGSIVALALL, GLWTWITDTGVIGGLLIWHIVGA, VWMRLPATAAAIATWLIISRCVL, VAANRVAMLTAGATFLAAWL, PLIAFAVITVWMLVENSI, LWPAAVAIVIAMFSVTLAPQGLI, FAVLVLLLCLFGLIMVLL, GAVSGPLWRLCGSTAIGLLLLIL, WAIQFGAFAGLAGALGGVTAFAF, ALYVTALLFILAWATSGLNGWFY, IAHYPVTTIFLVLAIVGGLLAGW, and ALASTPLLIVATIMVVLELGSMV. The tract at residues 772–798 is disordered; sequence PSGVSEHLEPEPVGTNPGTPNSEGPVD.

The protein belongs to the emb family.

Its subcellular location is the cell membrane. Arabinosyl transferase responsible for the polymerization of arabinose into the arabinan of arabinogalactan. The polypeptide is Probable arabinosyltransferase A (embA) (Mycolicibacterium smegmatis (Mycobacterium smegmatis)).